The primary structure comprises 273 residues: Dermonecrotic toxin LhSicTox-alphaIA2biv (273 aa).

His5 is a catalytic residue. Mg(2+) contacts are provided by Glu25 and Asp27. His41 serves as the catalytic Nucleophile. Intrachain disulfides connect Cys45-Cys51 and Cys47-Cys190. Mg(2+) is bound at residue Asp85.

Belongs to the arthropod phospholipase D family. Class II subfamily. Mg(2+) serves as cofactor. Expressed by the venom gland.

Its subcellular location is the secreted. It carries out the reaction an N-(acyl)-sphingosylphosphocholine = an N-(acyl)-sphingosyl-1,3-cyclic phosphate + choline. The catalysed reaction is an N-(acyl)-sphingosylphosphoethanolamine = an N-(acyl)-sphingosyl-1,3-cyclic phosphate + ethanolamine. The enzyme catalyses a 1-acyl-sn-glycero-3-phosphocholine = a 1-acyl-sn-glycero-2,3-cyclic phosphate + choline. It catalyses the reaction a 1-acyl-sn-glycero-3-phosphoethanolamine = a 1-acyl-sn-glycero-2,3-cyclic phosphate + ethanolamine. In terms of biological role, dermonecrotic toxins cleave the phosphodiester linkage between the phosphate and headgroup of certain phospholipids (sphingolipid and lysolipid substrates), forming an alcohol (often choline) and a cyclic phosphate. This toxin acts on sphingomyelin (SM). It may also act on ceramide phosphoethanolamine (CPE), lysophosphatidylcholine (LPC) and lysophosphatidylethanolamine (LPE), but not on lysophosphatidylserine (LPS), and lysophosphatidylglycerol (LPG). It acts by transphosphatidylation, releasing exclusively cyclic phosphate products as second products. Induces dermonecrosis, hemolysis, increased vascular permeability, edema, inflammatory response, and platelet aggregation. In Loxosceles hirsuta (Recluse spider), this protein is Dermonecrotic toxin LhSicTox-alphaIA2biv.